Reading from the N-terminus, the 73-residue chain is Large ribosomal subunit protein bL31 (73 aa).

This sequence belongs to the bacterial ribosomal protein bL31 family. Type A subfamily. In terms of assembly, part of the 50S ribosomal subunit.

Its function is as follows. Binds the 23S rRNA. The chain is Large ribosomal subunit protein bL31 (rpmE) from Ruegeria pomeroyi (strain ATCC 700808 / DSM 15171 / DSS-3) (Silicibacter pomeroyi).